Reading from the N-terminus, the 90-residue chain is uncharacterized protein (90 aa).

The chain crosses the membrane as a helical span at residues 69 to 89 (LLYIFLGAMIVIIFLVIKNQL).

The protein belongs to the IIV-6 466R family.

It is found in the membrane. This is an uncharacterized protein from Invertebrate iridescent virus 6 (IIV-6).